A 701-amino-acid chain; its full sequence is DNA ligase (701 aa).

Residues aspartate 43–aspartate 47, serine 92–leucine 93, and glutamate 126 contribute to the NAD(+) site. Residue lysine 128 is the N6-AMP-lysine intermediate of the active site. Residues arginine 149, glutamate 186, lysine 302, and lysine 326 each contribute to the NAD(+) site. Positions 420, 423, 444, and 450 each coordinate Zn(2+). Residues alanine 623–alanine 701 form the BRCT domain.

The protein belongs to the NAD-dependent DNA ligase family. LigA subfamily. Mg(2+) is required as a cofactor. It depends on Mn(2+) as a cofactor.

The enzyme catalyses NAD(+) + (deoxyribonucleotide)n-3'-hydroxyl + 5'-phospho-(deoxyribonucleotide)m = (deoxyribonucleotide)n+m + AMP + beta-nicotinamide D-nucleotide.. Its function is as follows. DNA ligase that catalyzes the formation of phosphodiester linkages between 5'-phosphoryl and 3'-hydroxyl groups in double-stranded DNA using NAD as a coenzyme and as the energy source for the reaction. It is essential for DNA replication and repair of damaged DNA. The protein is DNA ligase of Maricaulis maris (strain MCS10) (Caulobacter maris).